Here is a 248-residue protein sequence, read N- to C-terminus: MATLIQRSLSLAKSSTPALQFLRFRGKINIQRPKAPHYERARVVAVTQPKYPELPKAKSCFKTRAERTQQQQENPYNEIIAREVRNWLDHSRLVAFFHLSSITADDIFRVRVQLHKQNLHLKSYGSKIIEQAVKNTRYEAIVPLFHSNHCIVFSPDPEKTAALLRIVRRVPQMVLLGGIVEETMLSRNQLVAYAQMPGLHAVQAQLVQTLSQAPGHLIQQLQAHQNSFVQVLDVHAKNQMNEETPKST.

A mitochondrion-targeting transit peptide spans 1-24; that stretch reads MATLIQRSLSLAKSSTPALQFLRF.

Belongs to the universal ribosomal protein uL10 family. As to quaternary structure, component of the mitochondrial ribosome large subunit (39S) which comprises a 16S rRNA and about 50 distinct proteins.

The protein localises to the mitochondrion. This chain is Large ribosomal subunit protein uL10m (mRpL10), found in Drosophila melanogaster (Fruit fly).